Reading from the N-terminus, the 571-residue chain is E3 ubiquitin-protein ligase RNF168 (571 aa).

The RING-type zinc-finger motif lies at 16–55 (CGICMEILVEPVTLPCNHTLCKPCFQSTVEKASLCCPFCR). Phosphoserine is present on serine 70. The LR motif 1 signature appears at 110 to 128 (LSKPGELRREYEEEISKVA). Serine 134 bears the Phosphoserine mark. Residues 143–151 (EEYIQRLLA) carry the UMI motif motif. 2 disordered regions span residues 151-174 (AEEEEEEKRQAEKRRRAMEEQLKS) and 191-292 (EGSI…GADS). The MIU motif 1 signature appears at 168–191 (MEEQLKSDEELARKLSIDINNFCE). A Phosphoserine modification is found at serine 197. Basic and acidic residues predominate over residues 202-214 (RKSDPVTPKSEKK). Lysine 210 participates in a covalent cross-link: Glycyl lysine isopeptide (Lys-Gly) (interchain with G-Cter in SUMO2). The span at 231–242 (PKSQFGSASHSE) shows a compositional bias: polar residues. Over residues 243-263 (AVQEVRKDSVSKDIDSSDRKS) the composition is skewed to basic and acidic residues. Residue threonine 362 is modified to Phosphothreonine. 2 disordered regions span residues 390–422 (NQESSFEAVKDPCFSAKRRKVSPESSPDQEETE) and 459–560 (KEQM…ISQK). Residues serine 411, serine 414, and serine 415 each carry the phosphoserine modification. Residues 439–462 (RHKQEEQDRLLALQLQKEVDKEQM) carry the MIU motif 2 motif. The short motif at 466-477 (RQKGSPDEYHLR) is the LR motif 2 element. Residue serine 470 is modified to Phosphoserine. Residues 508–519 (PTPERGSRDKNR) are compositionally biased toward basic and acidic residues. 2 stretches are compositionally biased toward polar residues: residues 520–530 (QVSLKMQLKQS) and 549–560 (SAHSLQPSISQK). Lysine 528 participates in a covalent cross-link: Glycyl lysine isopeptide (Lys-Gly) (interchain with G-Cter in SUMO2).

The protein belongs to the RNF168 family. As to quaternary structure, monomer. Interacts with UBE2N/UBC13. In terms of processing, sumoylated with SUMO1 by PIAS4 in response to double-strand breaks (DSBs). Post-translationally, ubiquitinated.

It localises to the nucleus. It carries out the reaction S-ubiquitinyl-[E2 ubiquitin-conjugating enzyme]-L-cysteine + [acceptor protein]-L-lysine = [E2 ubiquitin-conjugating enzyme]-L-cysteine + N(6)-ubiquitinyl-[acceptor protein]-L-lysine.. It functions in the pathway protein modification; protein ubiquitination. E3 ubiquitin-protein ligase required for accumulation of repair proteins to sites of DNA damage. Acts with UBE2N/UBC13 to amplify the RNF8-dependent histone ubiquitination. Recruited to sites of DNA damage at double-strand breaks (DSBs) by binding to ubiquitinated histone H2A and H2AX and amplifies the RNF8-dependent H2A ubiquitination, promoting the formation of 'Lys-63'-linked ubiquitin conjugates. This leads to concentrate ubiquitinated histones H2A and H2AX at DNA lesions to the threshold required for recruitment of TP53BP1 and BRCA1. Also recruited at DNA interstrand cross-links (ICLs) sites and promotes accumulation of 'Lys-63'-linked ubiquitination of histones H2A and H2AX, leading to recruitment of FAAP20/C1orf86 and Fanconi anemia (FA) complex, followed by interstrand cross-link repair. H2A ubiquitination also mediates the ATM-dependent transcriptional silencing at regions flanking DSBs in cis, a mechanism to avoid collision between transcription and repair intermediates. Also involved in class switch recombination in immune system, via its role in regulation of DSBs repair. Following DNA damage, promotes the ubiquitination and degradation of JMJD2A/KDM4A in collaboration with RNF8, leading to unmask H4K20me2 mark and promote the recruitment of TP53BP1 at DNA damage sites. Not able to initiate 'Lys-63'-linked ubiquitination in vitro; possibly due to partial occlusion of the UBE2N/UBC13-binding region. Catalyzes monoubiquitination of 'Lys-13' and 'Lys-15' of nucleosomal histone H2A (H2AK13Ub and H2AK15Ub, respectively). The sequence is that of E3 ubiquitin-protein ligase RNF168 from Homo sapiens (Human).